The chain runs to 463 residues: Probable ECA polymerase (463 aa).

The next 11 membrane-spanning stretches (helical) occupy residues 6-26, 39-59, 65-85, 112-132, 154-174, 180-200, 201-221, 222-242, 340-360, 377-397, and 408-428; these read FGGLFVVYLISVIFILSLTWM, FSLLYLLTFYFGFPFTCVLVF, VVPVQFLLQAMLSATAFYAIY, ANLTWLLLALIAVATVGIFFL, GVALKRFFYFFIPAMLVVYFL, AWLMFLIGTVAFGMLTYVIVG, GTRANLIIAFALFLFIGIVRG, WITLWMLVAAGAFGIVGMFWL, LVVMGGVLFIPLGAIAVGLVI, YKAAILQAFCFGAVFNIIVLT, and VVFFCLVFGLCLLVAKLLYWL.

Belongs to the WzyE family. As to quaternary structure, probably part of a complex composed of WzxE, WzyE and WzzE.

It localises to the cell inner membrane. Its pathway is bacterial outer membrane biogenesis; enterobacterial common antigen biosynthesis. Its function is as follows. Probably involved in the polymerization of enterobacterial common antigen (ECA) trisaccharide repeat units. This is Probable ECA polymerase from Pectobacterium carotovorum subsp. carotovorum (strain PC1).